A 269-amino-acid chain; its full sequence is GRF-interacting factor 10 (269 aa).

Residues 1-71 (MTAEGEAKNP…GEKDDGACRD (71 aa)) form a disordered region. Positions 22–43 (QQAAPAPAPAQGEVAQEAAVQG) are enriched in low complexity. Positions 47 to 69 (EQERDKADREVQGGAGEKDDGAC) are enriched in basic and acidic residues. Residues 113-148 (AFTAMQLQELEQQSRVYQYMAARVPVPTHLVFPVWK) form the QLQ domain. A WRC domain is found at 179–223 (EPEPGRCRRTDGKKWRCWRNTIPNEKYCERHMHRGRKRPVQVFLE). 2 short sequence motifs (bipartite nuclear localization signal) span residues 184-194 (RCRRTDGKKWR) and 212-216 (RGRKR). Positions 217–269 (PVQVFLEDDEPDSASGSKPAAPGKATEGAKKADDKSPSSKKLAVAAPAAVQST) are disordered. Basic and acidic residues predominate over residues 243-253 (EGAKKADDKSP).

Belongs to the GRF family. Interacts with GIF1. In terms of tissue distribution, highly expressed in shoots. Expressed in developing leaves.

The protein localises to the nucleus. Involved in the regulation of cell proliferation in developing shoots and leaves. Does not possess transactivation activity. The protein is GRF-interacting factor 10 of Zea mays (Maize).